We begin with the raw amino-acid sequence, 735 residues long: Disintegrin and metalloproteinase domain-containing protein 2 (735 aa).

Residues 1–18 (MWLILLLLSGLSELGGLS) form the signal peptide. Residues 19 to 180 (QSQTEGTREK…YKIRSIKPQR (162 aa)) constitute a propeptide that is removed on maturation. The Extracellular portion of the chain corresponds to 19–686 (QSQTEGTREK…ASAYRSKSPR (668 aa)). 3 N-linked (GlcNAc...) asparagine glycosylation sites follow: asparagine 128, asparagine 226, and asparagine 279. The 198-residue stretch at 184–381 (HYLEIHIVVE…QSSHCLQNQP (198 aa)) folds into the Peptidase M12B domain. Cystine bridges form between cysteine 293-cysteine 376, cysteine 335-cysteine 360, cysteine 337-cysteine 342, and cysteine 449-cysteine 469. 5 N-linked (GlcNAc...) asparagine glycosylation sites follow: asparagine 359, asparagine 463, asparagine 489, asparagine 569, and asparagine 585. In terms of domain architecture, Disintegrin spans 389-476 (MAVCGNGEVE…EVCEDFFVQN (88 aa)). The EGF-like domain maps to 615–648 (LGYDCNLEKCNHHGVCNNKKNCHCDPTYLPPDCK). Disulfide bonds link cysteine 619–cysteine 630, cysteine 624–cysteine 636, and cysteine 638–cysteine 647. A helical membrane pass occupies residues 687–707 (WPFFLIIPFYVVILVLIGMLV). Over 708 to 735 (KVYSQRMKWRMDDFSSEEQFESESESKD) the chain is Cytoplasmic. The residue at position 729 (serine 729) is a Phosphoserine.

Heterodimer with ADAM1/fertilin subunit alpha. The signal and the metalloprotease domain are cleaved during the epididymal maturation of the spermatozoa. As to expression, expressed in the testis and testicular sperm (at protein level).

It localises to the membrane. Functionally, sperm surface membrane protein that may be involved in sperm-egg plasma membrane adhesion and fusion during fertilization. Could have a direct role in sperm-zona binding or migration of sperm from the uterus into the oviduct. Interactions with egg membrane could be mediated via binding between its disintegrin-like domain to one or more integrins receptors on the egg. This is a non catalytic metalloprotease-like protein. The sequence is that of Disintegrin and metalloproteinase domain-containing protein 2 from Mus musculus (Mouse).